Consider the following 156-residue polypeptide: Crossover junction endodeoxyribonuclease RuvC (156 aa).

Active-site residues include D9, E69, and D141. Positions 9, 69, and 141 each coordinate Mg(2+).

Belongs to the RuvC family. In terms of assembly, homodimer which binds Holliday junction (HJ) DNA. The HJ becomes 2-fold symmetrical on binding to RuvC with unstacked arms; it has a different conformation from HJ DNA in complex with RuvA. In the full resolvosome a probable DNA-RuvA(4)-RuvB(12)-RuvC(2) complex forms which resolves the HJ. The cofactor is Mg(2+).

It is found in the cytoplasm. The enzyme catalyses Endonucleolytic cleavage at a junction such as a reciprocal single-stranded crossover between two homologous DNA duplexes (Holliday junction).. In terms of biological role, the RuvA-RuvB-RuvC complex processes Holliday junction (HJ) DNA during genetic recombination and DNA repair. Endonuclease that resolves HJ intermediates. Cleaves cruciform DNA by making single-stranded nicks across the HJ at symmetrical positions within the homologous arms, yielding a 5'-phosphate and a 3'-hydroxyl group; requires a central core of homology in the junction. The consensus cleavage sequence is 5'-(A/T)TT(C/G)-3'. Cleavage occurs on the 3'-side of the TT dinucleotide at the point of strand exchange. HJ branch migration catalyzed by RuvA-RuvB allows RuvC to scan DNA until it finds its consensus sequence, where it cleaves and resolves the cruciform DNA. The protein is Crossover junction endodeoxyribonuclease RuvC of Acaryochloris marina (strain MBIC 11017).